A 224-amino-acid polypeptide reads, in one-letter code: UPF0758 protein Pmen_4376 (224 aa).

In terms of domain architecture, MPN spans 102 to 224; it reads ALESPQAVRD…PLSMAELGWM (123 aa). His-173, His-175, and Asp-186 together coordinate Zn(2+). Positions 173-186 match the JAMM motif motif; sequence HNHPSGVCEPSQAD.

Belongs to the UPF0758 family.

The sequence is that of UPF0758 protein Pmen_4376 from Ectopseudomonas mendocina (strain ymp) (Pseudomonas mendocina).